We begin with the raw amino-acid sequence, 927 residues long: Clumping factor A (927 aa).

Residues 1–39 (MNMKKKEKHAIRKKSIGVASVLVGTLIGFGLLSSKEADA) form the signal peptide. A YSIRK-G/S signaling motif motif is present at residues 9–20 (HAIRKKSIGVAS). Disordered regions lie at residues 34 to 200 (SKEA…SNKD) and 529 to 898 (FNNG…SEDE). Residues 40-542 (SENSVTQSDS…SGSGDGIDKP (503 aa)) are ligand binding A region. Positions 47–65 (SDSASNESKSNDSSSVSAA) are enriched in low complexity. Residues 71-105 (TNVSDTKTSSNTNNGETSVAQNPAQQETTQSSSTN) are compositionally biased toward polar residues. 2 stretches are compositionally biased toward low complexity: residues 106 to 132 (ATTEETPVTGEATTTTTNQANTPATTQ) and 143 to 162 (NQTSNETTSNDTNTVSSVNS). Positions 163–200 (PQNSTNAENVSTTQDTSTEATPSNNESAPQSTDASNKD) are enriched in polar residues. Acidic residues predominate over residues 547–565 (QPDEPGEIEPIPEDSDSDP). The segment covering 566 to 598 (GSDSGSDSNSDSGSDSGSDSTSDSGSDSASDSD) has biased composition (low complexity). A compositionally biased stretch (acidic residues) spans 599–855 (SASDSDSASD…DSDSESDSNS (257 aa)). Positions 856 to 867 (DSESVSNNNVVP) are enriched in low complexity. The span at 881 to 890 (NEAKDSKEPL) shows a compositional bias: basic and acidic residues. The short motif at 890–894 (LPDTG) is the LPXTG sorting signal element. Residue Thr-893 is modified to Pentaglycyl murein peptidoglycan amidated threonine. Residues 894-927 (GSEDEANTSLIWGLLASIGSLLLFRRKKENKDKK) constitute a propeptide, removed by sortase.

The protein belongs to the serine-aspartate repeat-containing protein (SDr) family.

The protein localises to the secreted. Its subcellular location is the cell wall. Its function is as follows. Cell surface-associated protein implicated in virulence. Promotes bacterial attachment exclusively to the gamma-chain of human fibrinogen. Induces formation of bacterial clumps, which diminish the ability of group IIA phospholipase A2 to cause bacterial phospholipid hydrolysis and killing. Significantly decreases macrophage phagocytosis possibly thanks to the clumps, clumped bacteria being too large to be phagocytosed. Dominant factor responsible for human platelet aggregation, which may be an important mechanism for initiating infective endocarditis. Enhances spleen cell proliferative response in vitro, contributing significantly to the immunostimulatory activity of S.aureus. This is Clumping factor A (clfA) from Staphylococcus aureus (strain NCTC 8325 / PS 47).